We begin with the raw amino-acid sequence, 506 residues long: Cobyric acid synthase (506 aa).

Residues 251–448 (DITIAIVQLP…LHGLFDSDAF (198 aa)) form the GATase cobBQ-type domain. The Nucleophile role is filled by Cys-332. The active site involves His-440.

The protein belongs to the CobB/CobQ family. CobQ subfamily.

Its pathway is cofactor biosynthesis; adenosylcobalamin biosynthesis. Its function is as follows. Catalyzes amidations at positions B, D, E, and G on adenosylcobyrinic A,C-diamide. NH(2) groups are provided by glutamine, and one molecule of ATP is hydrogenolyzed for each amidation. This Salmonella choleraesuis (strain SC-B67) protein is Cobyric acid synthase.